Reading from the N-terminus, the 846-residue chain is DNA mismatch repair protein MutS (846 aa).

An ATP-binding site is contributed by 610–617 (GPNMGGKS).

The protein belongs to the DNA mismatch repair MutS family.

This protein is involved in the repair of mismatches in DNA. It is possible that it carries out the mismatch recognition step. This protein has a weak ATPase activity. In Legionella pneumophila (strain Paris), this protein is DNA mismatch repair protein MutS.